A 352-amino-acid polypeptide reads, in one-letter code: Probable RNA methyltransferase CV_2253 (352 aa).

Glutamate 91 functions as the Proton acceptor in the catalytic mechanism. Residues 94–320 (LLPRDGLCVS…TKVRDSAGQD (227 aa)) form the Radical SAM core domain. Cysteine 101 and cysteine 325 are joined by a disulfide. [4Fe-4S] cluster-binding residues include cysteine 108, cysteine 112, and cysteine 115. S-adenosyl-L-methionine contacts are provided by residues 153-154 (GE), serine 183, 206-208 (SLH), and asparagine 282. The active-site S-methylcysteine intermediate is the cysteine 325.

It belongs to the radical SAM superfamily. RlmN family. [4Fe-4S] cluster serves as cofactor.

Its subcellular location is the cytoplasm. The polypeptide is Probable RNA methyltransferase CV_2253 (Chromobacterium violaceum (strain ATCC 12472 / DSM 30191 / JCM 1249 / CCUG 213 / NBRC 12614 / NCIMB 9131 / NCTC 9757 / MK)).